The chain runs to 118 residues: Small ribosomal subunit protein uS13 (118 aa).

The interval 94–118 is disordered; it reads SLPVHGQRTKTNARTCKGPRKPIKK.

This sequence belongs to the universal ribosomal protein uS13 family. In terms of assembly, part of the 30S ribosomal subunit. Forms a loose heterodimer with protein S19. Forms two bridges to the 50S subunit in the 70S ribosome.

Its function is as follows. Located at the top of the head of the 30S subunit, it contacts several helices of the 16S rRNA. In the 70S ribosome it contacts the 23S rRNA (bridge B1a) and protein L5 of the 50S subunit (bridge B1b), connecting the 2 subunits; these bridges are implicated in subunit movement. Contacts the tRNAs in the A and P-sites. This Buchnera aphidicola subsp. Acyrthosiphon pisum (strain 5A) protein is Small ribosomal subunit protein uS13.